A 236-amino-acid chain; its full sequence is Pyridoxine 5'-phosphate synthase (236 aa).

N6 contacts 3-amino-2-oxopropyl phosphate. A 1-deoxy-D-xylulose 5-phosphate-binding site is contributed by 8–9; the sequence is DH. R17 serves as a coordination point for 3-amino-2-oxopropyl phosphate. Catalysis depends on H42, which acts as the Proton acceptor. 1-deoxy-D-xylulose 5-phosphate is bound by residues R44 and H49. Catalysis depends on E69, which acts as the Proton acceptor. A 1-deoxy-D-xylulose 5-phosphate-binding site is contributed by T99. Catalysis depends on H190, which acts as the Proton donor. 3-amino-2-oxopropyl phosphate is bound by residues G191 and 212–213; that span reads GH.

It belongs to the PNP synthase family. In terms of assembly, homooctamer; tetramer of dimers.

It is found in the cytoplasm. The catalysed reaction is 3-amino-2-oxopropyl phosphate + 1-deoxy-D-xylulose 5-phosphate = pyridoxine 5'-phosphate + phosphate + 2 H2O + H(+). The protein operates within cofactor biosynthesis; pyridoxine 5'-phosphate biosynthesis; pyridoxine 5'-phosphate from D-erythrose 4-phosphate: step 5/5. Catalyzes the complicated ring closure reaction between the two acyclic compounds 1-deoxy-D-xylulose-5-phosphate (DXP) and 3-amino-2-oxopropyl phosphate (1-amino-acetone-3-phosphate or AAP) to form pyridoxine 5'-phosphate (PNP) and inorganic phosphate. The protein is Pyridoxine 5'-phosphate synthase of Prosthecochloris aestuarii (strain DSM 271 / SK 413).